Here is a 296-residue protein sequence, read N- to C-terminus: 33 kDa chaperonin (296 aa).

2 disulfide bridges follow: C238–C240 and C271–C274.

It belongs to the HSP33 family. In terms of processing, under oxidizing conditions two disulfide bonds are formed involving the reactive cysteines. Under reducing conditions zinc is bound to the reactive cysteines and the protein is inactive.

The protein localises to the cytoplasm. In terms of biological role, redox regulated molecular chaperone. Protects both thermally unfolding and oxidatively damaged proteins from irreversible aggregation. Plays an important role in the bacterial defense system toward oxidative stress. The polypeptide is 33 kDa chaperonin (Clostridium botulinum (strain ATCC 19397 / Type A)).